Reading from the N-terminus, the 421-residue chain is MDKFRVKGPTRLSGEVTISGAKNAALPILFAALLAEEPVELQNVPELKDIDTTIKLLNRLGTKVERNGSVFVDARDVNQYCAPYELVKTMRASIWALGPLVARFGQGQVSLPGGCAIGARPVDLHISGLEQLGAEIVLEEGYVKASVNGRLKGACIVMDKVSVGATVTIMTAATLAEGTTVIENAAREPEIEDTANFLNTLGAKITGAGTDHITIEGVERLGGGVYRVLPDRIETGTFLVAAAISGGKVVCRHAQPNTLDAVLAKLREAGADIAIGKDWVSLDMHGKRPKAVTLRTAPHPGFPTDMQAQFSLLNLVAEGAGMITETIFENRFMHIPELIRMGAHAEIESNTVLCHGVKKLSCAQVMATDLRASASLVLAGCIAEGVTVVDRIYHIDRGYEHIEDKLRGLGANIERVKSTGK.

22–23 lines the phosphoenolpyruvate pocket; that stretch reads KN. Arginine 91 provides a ligand contact to UDP-N-acetyl-alpha-D-glucosamine. Cysteine 115 (proton donor) is an active-site residue. At cysteine 115 the chain carries 2-(S-cysteinyl)pyruvic acid O-phosphothioketal. UDP-N-acetyl-alpha-D-glucosamine is bound by residues 120–124, 160–163, aspartate 305, and isoleucine 327; these read RPVDL and KVSV.

Belongs to the EPSP synthase family. MurA subfamily.

The protein resides in the cytoplasm. It catalyses the reaction phosphoenolpyruvate + UDP-N-acetyl-alpha-D-glucosamine = UDP-N-acetyl-3-O-(1-carboxyvinyl)-alpha-D-glucosamine + phosphate. The protein operates within cell wall biogenesis; peptidoglycan biosynthesis. Cell wall formation. Adds enolpyruvyl to UDP-N-acetylglucosamine. The sequence is that of UDP-N-acetylglucosamine 1-carboxyvinyltransferase from Photorhabdus laumondii subsp. laumondii (strain DSM 15139 / CIP 105565 / TT01) (Photorhabdus luminescens subsp. laumondii).